We begin with the raw amino-acid sequence, 256 residues long: Pimeloyl-[acyl-carrier protein] methyl ester esterase (256 aa).

Residues 16 to 240 (LVILHGWGVN…PKASHAPFLS (225 aa)) form the AB hydrolase-1 domain. Substrate contacts are provided by residues Trp-22, 80–81 (SL), and 143–147 (FLAIQ). Catalysis depends on Ser-80, which acts as the Nucleophile. Residues Asp-207 and His-235 contribute to the active site. His-235 contacts substrate.

This sequence belongs to the AB hydrolase superfamily. Carboxylesterase BioH family. As to quaternary structure, monomer.

The protein localises to the cytoplasm. The catalysed reaction is 6-carboxyhexanoyl-[ACP] methyl ester + H2O = 6-carboxyhexanoyl-[ACP] + methanol + H(+). Its pathway is cofactor biosynthesis; biotin biosynthesis. Its function is as follows. The physiological role of BioH is to remove the methyl group introduced by BioC when the pimeloyl moiety is complete. It allows to synthesize pimeloyl-ACP via the fatty acid synthetic pathway through the hydrolysis of the ester bonds of pimeloyl-ACP esters. The chain is Pimeloyl-[acyl-carrier protein] methyl ester esterase from Shewanella woodyi (strain ATCC 51908 / MS32).